A 425-amino-acid chain; its full sequence is Proteinase-activated receptor 1 (425 aa).

The first 21 residues, 1–21 (MGPRRLLLVAACFSLCGPLLS), serve as a signal peptide directing secretion. Residues 22 to 41 (ARTRARRPESKATNATLDPR) constitute a propeptide that is removed on maturation. N35, N62, and N75 each carry an N-linked (GlcNAc...) asparagine glycan. Over 42 to 102 (SFLLRNPNDK…SGYLTSSWLT (61 aa)) the chain is Extracellular. A helical membrane pass occupies residues 103-128 (LFVPSVYTGVFVVSLPLNIMAIVVFI). Topologically, residues 129–137 (LKMKVKKPA) are cytoplasmic. The chain crosses the membrane as a helical span at residues 138-157 (VVYMLHLATADVLFVSVLPF). The Extracellular segment spans residues 158–176 (KISYYFSGSDWQFGSELCR). An intrachain disulfide couples C175 to C254. Residues 177 to 198 (FVTAAFYCNMYASILLMTVISI) form a helical membrane-spanning segment. Residues 199–218 (DRFLAVVYPMQSLSWRTLGR) lie on the Cytoplasmic side of the membrane. Residues 219 to 239 (ASFTCLAIWALAIAGVVPLLL) traverse the membrane as a helical segment. Topologically, residues 240–268 (KEQTIQVPGLNITTCHDVLNETLLEGYYA) are extracellular. N-linked (GlcNAc...) asparagine glycans are attached at residues N250 and N259. Residues 269-288 (YYFSAFSAVFFFVPLIISTV) traverse the membrane as a helical segment. Topologically, residues 289–311 (CYVSIIRCLSSSAVANRSKKSRA) are cytoplasmic. Residues 312–334 (LFLSAAVFCIFIICFGPTNVLLI) traverse the membrane as a helical segment. Topologically, residues 335 to 350 (AHYSFLSHTSTTEAAY) are extracellular. Residues 351-374 (FAYLLCVCVSSISCCIDPLIYYYA) traverse the membrane as a helical segment. Topologically, residues 375-425 (SSECQRYVYSILCCKESSDPSSYNSSGQLMASKMDTCSSNLNNSIYKKLLT) are cytoplasmic. S418 carries the phosphoserine modification.

The protein belongs to the G-protein coupled receptor 1 family. Proteolytic cleavage by thrombin generates a new N-terminus that functions as a tethered ligand. Also proteolytically cleaved by cathepsin CTSG. Cleavage at 41-Arg-|-Ser-42 by CTSG results in receptor activation while cleavage at 55-Phe-|-Trp-56 results in inhibition of receptor activation. Post-translationally, phosphorylated in the C-terminal tail; probably mediating desensitization prior to the uncoupling and internalization of the receptor. In terms of tissue distribution, platelets and vascular endothelial cells.

The protein localises to the cell membrane. In terms of biological role, high affinity receptor that binds the activated thrombin, leading to calcium release from intracellular stores. The thrombin-activated receptor signaling pathway is mediated through PTX-insensitive G proteins, activation of phospholipase C resulting in the production of 1D-myo-inositol 1,4,5-trisphosphate (InsP3) which binds to InsP3 receptors causing calcium release from the stores. In astrocytes, the calcium released into the cytosol allows the Ca(2+)-dependent release of L-glutamate into the synaptic cleft through BEST1, that targets the neuronal postsynaptic GRIN2A/NMDAR receptor resulting in the synaptic plasticity regulation. May play a role in platelets activation and in vascular development. Mediates up-regulation of pro-inflammatory cytokines, such as MCP-1/CCL2 and IL6, triggered by coagulation factor Xa (F10) in cardiac fibroblasts and umbilical vein endothelial cells. This is Proteinase-activated receptor 1 from Homo sapiens (Human).